The following is a 213-amino-acid chain: Regulatory protein RecX (213 aa).

Belongs to the RecX family.

It is found in the cytoplasm. Functionally, modulates RecA activity. This Clostridium beijerinckii (strain ATCC 51743 / NCIMB 8052) (Clostridium acetobutylicum) protein is Regulatory protein RecX.